The primary structure comprises 314 residues: uncharacterized protein (314 aa).

This is an uncharacterized protein from Methanocaldococcus jannaschii (strain ATCC 43067 / DSM 2661 / JAL-1 / JCM 10045 / NBRC 100440) (Methanococcus jannaschii).